A 487-amino-acid polypeptide reads, in one-letter code: Probable glycine dehydrogenase (decarboxylating) subunit 2 (487 aa).

K269 carries the N6-(pyridoxal phosphate)lysine modification.

The protein belongs to the GcvP family. C-terminal subunit subfamily. In terms of assembly, the glycine cleavage system is composed of four proteins: P, T, L and H. In this organism, the P 'protein' is a heterodimer of two subunits. Pyridoxal 5'-phosphate is required as a cofactor.

It carries out the reaction N(6)-[(R)-lipoyl]-L-lysyl-[glycine-cleavage complex H protein] + glycine + H(+) = N(6)-[(R)-S(8)-aminomethyldihydrolipoyl]-L-lysyl-[glycine-cleavage complex H protein] + CO2. Its function is as follows. The glycine cleavage system catalyzes the degradation of glycine. The P protein binds the alpha-amino group of glycine through its pyridoxal phosphate cofactor; CO(2) is released and the remaining methylamine moiety is then transferred to the lipoamide cofactor of the H protein. The sequence is that of Probable glycine dehydrogenase (decarboxylating) subunit 2 from Prosthecochloris aestuarii (strain DSM 271 / SK 413).